Here is a 271-residue protein sequence, read N- to C-terminus: 3-methyl-2-oxobutanoate hydroxymethyltransferase 1 (271 aa).

Residues Asp-53 and Asp-92 each contribute to the Mg(2+) site. Residues 53-54 (DS), Asp-92, and Lys-120 contribute to the 3-methyl-2-oxobutanoate site. Mg(2+) is bound at residue Glu-122. Residue Glu-189 is the Proton acceptor of the active site.

This sequence belongs to the PanB family. Homodecamer; pentamer of dimers. Requires Mg(2+) as cofactor.

The protein localises to the cytoplasm. The catalysed reaction is 3-methyl-2-oxobutanoate + (6R)-5,10-methylene-5,6,7,8-tetrahydrofolate + H2O = 2-dehydropantoate + (6S)-5,6,7,8-tetrahydrofolate. It functions in the pathway cofactor biosynthesis; (R)-pantothenate biosynthesis; (R)-pantoate from 3-methyl-2-oxobutanoate: step 1/2. Functionally, catalyzes the reversible reaction in which hydroxymethyl group from 5,10-methylenetetrahydrofolate is transferred onto alpha-ketoisovalerate to form ketopantoate. The protein is 3-methyl-2-oxobutanoate hydroxymethyltransferase 1 of Burkholderia cenocepacia (strain HI2424).